The chain runs to 367 residues: MEAERLNAIESSLLDLRNRAGELRGYLDYDAKAARLTEVNKELEDPNVWNDSKNAQALGREKKLLEGVVTTLTALDSDLRDALDLFELAREEGDEDTLLASEEDAAKLEARVGDIEFRRMFSNPADPNNCFIDIQAGAGGTEACDWASMLLRQYLRYCERKGFKAEVLEESDGDVAGIKNATVKVTGEYAYGFLRTETGIHRLVRKSPFDSSGGRHTSFSSVFVYPEIDDSIEVEINPADLRIDTYRASGAGGQHINKTDSAVRITHMPTGIVVQCQNDRSQHRNRAEAMAMLKSRLYEVEMRKRQAEQDKLESSKTDVGWGHQIRSYVLDQSRVKDLRTNVEMSNTRAVLDGDLDDFISASLKQGV.

At Gln254 the chain carries N5-methylglutamine.

It belongs to the prokaryotic/mitochondrial release factor family. Post-translationally, methylated by PrmC. Methylation increases the termination efficiency of RF2.

It is found in the cytoplasm. Peptide chain release factor 2 directs the termination of translation in response to the peptide chain termination codons UGA and UAA. This Burkholderia cenocepacia (strain ATCC BAA-245 / DSM 16553 / LMG 16656 / NCTC 13227 / J2315 / CF5610) (Burkholderia cepacia (strain J2315)) protein is Peptide chain release factor 2.